Consider the following 125-residue polypeptide: Ribosome-binding factor A (125 aa).

Belongs to the RbfA family. As to quaternary structure, monomer. Binds 30S ribosomal subunits, but not 50S ribosomal subunits or 70S ribosomes.

It is found in the cytoplasm. One of several proteins that assist in the late maturation steps of the functional core of the 30S ribosomal subunit. Associates with free 30S ribosomal subunits (but not with 30S subunits that are part of 70S ribosomes or polysomes). Required for efficient processing of 16S rRNA. May interact with the 5'-terminal helix region of 16S rRNA. In Akkermansia muciniphila (strain ATCC BAA-835 / DSM 22959 / JCM 33894 / BCRC 81048 / CCUG 64013 / CIP 107961 / Muc), this protein is Ribosome-binding factor A.